The following is a 901-amino-acid chain: Putative serine/threonine-protein kinase YPL150W (901 aa).

The region spanning 41 to 287 (YKILKQIGEG…LSQVLRHPFL (247 aa)) is the Protein kinase domain. Residues 47–55 (IGEGSFGKV) and lysine 70 contribute to the ATP site. Aspartate 157 (proton acceptor) is an active-site residue. Serine 456 carries the phosphoserine modification. Residues 500 to 530 (APSSGSFLKKNSGSIQKSRTDTVANPSRTES) are disordered. Residue serine 533 is modified to Phosphoserine. Residues 588–599 (SSISSEISQTST) show a composition bias toward low complexity. Disordered regions lie at residues 588–629 (SSIS…NRPL) and 745–770 (TQRP…SSKR). Positions 600-613 (GNYDSESAENSRSI) are enriched in polar residues. Residues 759–770 (RHGKNARRSSKR) show a composition bias toward basic residues.

The protein belongs to the protein kinase superfamily. Ser/Thr protein kinase family.

It catalyses the reaction L-seryl-[protein] + ATP = O-phospho-L-seryl-[protein] + ADP + H(+). The catalysed reaction is L-threonyl-[protein] + ATP = O-phospho-L-threonyl-[protein] + ADP + H(+). In terms of biological role, putative serine/threonine-protein kinase. The sequence is that of Putative serine/threonine-protein kinase YPL150W from Saccharomyces cerevisiae (strain ATCC 204508 / S288c) (Baker's yeast).